Consider the following 300-residue polypeptide: N-acetylmuramic acid 6-phosphate etherase (300 aa).

The 164-residue stretch at 57–220 folds into the SIS domain; the sequence is IAVAFQCGGR…TTGAMIRTGK (164 aa). Glu-85 acts as the Proton donor in catalysis. Glu-116 is an active-site residue.

It belongs to the GCKR-like family. MurNAc-6-P etherase subfamily. As to quaternary structure, homodimer.

The catalysed reaction is N-acetyl-D-muramate 6-phosphate + H2O = N-acetyl-D-glucosamine 6-phosphate + (R)-lactate. It functions in the pathway amino-sugar metabolism; 1,6-anhydro-N-acetylmuramate degradation. The protein operates within amino-sugar metabolism; N-acetylmuramate degradation. It participates in cell wall biogenesis; peptidoglycan recycling. Its function is as follows. Specifically catalyzes the cleavage of the D-lactyl ether substituent of MurNAc 6-phosphate, producing GlcNAc 6-phosphate and D-lactate. Together with AnmK, is also required for the utilization of anhydro-N-acetylmuramic acid (anhMurNAc) either imported from the medium or derived from its own cell wall murein, and thus plays a role in cell wall recycling. The polypeptide is N-acetylmuramic acid 6-phosphate etherase (Aliivibrio salmonicida (strain LFI1238) (Vibrio salmonicida (strain LFI1238))).